A 483-amino-acid polypeptide reads, in one-letter code: Proline--tRNA ligase (483 aa).

The protein belongs to the class-II aminoacyl-tRNA synthetase family. ProS type 3 subfamily. As to quaternary structure, homodimer.

The protein resides in the cytoplasm. The catalysed reaction is tRNA(Pro) + L-proline + ATP = L-prolyl-tRNA(Pro) + AMP + diphosphate. Catalyzes the attachment of proline to tRNA(Pro) in a two-step reaction: proline is first activated by ATP to form Pro-AMP and then transferred to the acceptor end of tRNA(Pro). The polypeptide is Proline--tRNA ligase (Sulfolobus acidocaldarius (strain ATCC 33909 / DSM 639 / JCM 8929 / NBRC 15157 / NCIMB 11770)).